The chain runs to 421 residues: MRAKSHRYPESSECYTDTTYYDPEDKYLDIGFQMLKSINIKRYPEFSYLEKLFINNNNLKQLPDPQYLPKIKELVCSYNILTHIPFYPNLIKLDISHNQVQNINVYNQSKLLYLDCSFNKNIETRIFLPECRELYVNDANISKLEINYFPNLRILDCSNNNISRISSLSSLIELNIQNNHITELPSYPQLVRIMADNNKLCYVPTFPNLLSLSVSYNNIVKITDQPLLKKLVANNNSVIELGNLPKLKFFDLSFNKLNSVTIPSSAKYIFLQFNNFVSVDIDNCIGCVKELQVDFNIYSRIYSKYFDNIYAINIQTNRDKLHYYLQQYSQLSNEHIVNQILNKFNGIKFKEHTKKLFGISVGLYELIFVSQTIKNTSDKESYDKYFQSVLQTDYFKKFYEFIQYVYYNSIIVTLYFNGYIS.

LRR repeat units follow at residues 48-69 (YLEK…QYLP), 70-85 (KIKE…THIP), 89-110 (NLIK…NQSK), 111-129 (LLYL…IFLP), 130-150 (ECRE…NYFP), 151-172 (NLRI…SSLI), and 173-191 (ELNI…PQLV).

The polypeptide is Putative leucine-rich repeat protein R380 (Acanthamoeba polyphaga (Amoeba)).